The primary structure comprises 199 residues: Patulin biosynthesis cluster protein F (199 aa).

The signal sequence occupies residues Met1–Ala21. Residues Asn129 and Asn183 are each glycosylated (N-linked (GlcNAc...) asparagine).

Belongs to the patF family.

Its subcellular location is the cytoplasm. It is found in the cytosol. It carries out the reaction phyllostine = neopatulin. Its pathway is mycotoxin biosynthesis; patulin biosynthesis. In terms of biological role, part of the gene cluster that mediates the biosynthesis of patulin, an acetate-derived tetraketide mycotoxin produced by several fungal species that shows antimicrobial properties against several bacteria. PatF catalyzes the conversion of phyllostine into neopatulin. The pathway begins with the synthesis of 6-methylsalicylic acid by the polyketide synthase (PKS) patK via condensation of acetate and malonate units. The 6-methylsalicylic acid decarboxylase patG then catalyzes the decarboxylation of 6-methylsalicylic acid to yield m-cresol (also known as 3-methylphenol). These first reactions occur in the cytosol. The intermediate m-cresol is then transported into the endoplasmic reticulum where the cytochrome P450 monooxygenase patH converts it to m-hydroxybenzyl alcohol, which is further converted to gentisyl alcohol by the cytochrome P450 monooxygenase patI. The oxidoreductases patJ and patO further convert gentisyl alcohol to isoepoxydon in the vacuole. PatN catalyzes then the transformation of isoepoxydon into phyllostine. The cluster protein patF is responsible for the conversion from phyllostine to neopatulin whereas the alcohol dehydrogenase patD converts neopatulin to E-ascladiol. The steps between isoepoxydon and E-ascladiol occur in the cytosol, and E-ascladiol is probably secreted to the extracellular space by one of the cluster-specific transporters patC or patM. Finally, the secreted patulin synthase patE catalyzes the conversion of E-ascladiol to patulin. The chain is Patulin biosynthesis cluster protein F from Penicillium expansum (Blue mold rot fungus).